Reading from the N-terminus, the 367-residue chain is DNA replication and repair protein RecF (367 aa).

30 to 37 (GENAQGKT) contributes to the ATP binding site.

It belongs to the RecF family.

The protein localises to the cytoplasm. The RecF protein is involved in DNA metabolism; it is required for DNA replication and normal SOS inducibility. RecF binds preferentially to single-stranded, linear DNA. It also seems to bind ATP. The chain is DNA replication and repair protein RecF from Chlamydia abortus (strain DSM 27085 / S26/3) (Chlamydophila abortus).